Consider the following 397-residue polypeptide: 8-amino-7-oxononanoate synthase (397 aa).

Residue arginine 23 coordinates substrate. 110–111 provides a ligand contact to pyridoxal 5'-phosphate; sequence GY. Residue histidine 135 participates in substrate binding. Pyridoxal 5'-phosphate contacts are provided by serine 181, histidine 209, and threonine 237. The residue at position 240 (lysine 240) is an N6-(pyridoxal phosphate)lysine. Threonine 354 is a binding site for substrate.

The protein belongs to the class-II pyridoxal-phosphate-dependent aminotransferase family. BioF subfamily. As to quaternary structure, homodimer. Requires pyridoxal 5'-phosphate as cofactor.

It carries out the reaction 6-carboxyhexanoyl-[ACP] + L-alanine + H(+) = (8S)-8-amino-7-oxononanoate + holo-[ACP] + CO2. Its pathway is cofactor biosynthesis; biotin biosynthesis. Functionally, catalyzes the decarboxylative condensation of pimeloyl-[acyl-carrier protein] and L-alanine to produce 8-amino-7-oxononanoate (AON), [acyl-carrier protein], and carbon dioxide. The protein is 8-amino-7-oxononanoate synthase of Anaeromyxobacter dehalogenans (strain 2CP-C).